A 622-amino-acid chain; its full sequence is Dehydrogenase mpl7 (622 aa).

FAD-binding positions include 23–24, 44–45, and 102–105; these read TA, EA, and NFMS. H554 acts as the Proton acceptor in catalysis. FAD contacts are provided by residues A582 and 593–594; that span reads IM.

The protein belongs to the GMC oxidoreductase family. Homodimer. FAD serves as cofactor.

It functions in the pathway mycotoxin biosynthesis. Its function is as follows. Dehydrogenase; part of the gene cluster that mediates the biosynthesis of the mycotoxin citrinin, a hepato-nephrotoxic compound to humans due to inhibition of respiration complex III. The pathway begins with the synthesis of a keto-aldehyde intermediate by the citrinin PKS (pksCT) from successive condensations of 4 malonyl-CoA units, presumably with a simple acetyl-CoA starter unit. Release of the keto-aldehyde intermediate is consistent with the presence of the C-terminal reductive release domain. Mp11 collaborates with pksCT by catalyzing the hydrolysis of ACP-bound acyl intermediates to free the ACP from stalled intermediates. Mpl2 then catalyzes the oxidation of the C-12 methyl of the ketone intermediate to an alcohol intermediate which is further oxidized by the oxidoreductase mpl7 to produce a bisaldehyde intermediate. The fourth catalytic step is catalyzed by the mpl4 aldehyde dehydrogenase. The final transformation is the reduction of C-3 by mpl6 to provide the chemically stable citrinin nucleus. This is Dehydrogenase mpl7 from Monascus purpureus (Red mold).